Consider the following 269-residue polypeptide: Indole-3-glycerol phosphate synthase 1 (269 aa).

This sequence belongs to the TrpC family.

It catalyses the reaction 1-(2-carboxyphenylamino)-1-deoxy-D-ribulose 5-phosphate + H(+) = (1S,2R)-1-C-(indol-3-yl)glycerol 3-phosphate + CO2 + H2O. It functions in the pathway amino-acid biosynthesis; L-tryptophan biosynthesis; L-tryptophan from chorismate: step 4/5. This chain is Indole-3-glycerol phosphate synthase 1 (trpC1), found in Streptomyces coelicolor (strain ATCC BAA-471 / A3(2) / M145).